An 804-amino-acid chain; its full sequence is Type 2 DNA topoisomerase 6 subunit B (804 aa).

Residues Asn58, Asp89, 110–111, 120–127, and Lys629 each bind ATP; these read SR and GQQGIGIS.

The protein belongs to the TOP6B family. As to quaternary structure, homodimer. Heterotetramer of two Top6A and two Top6B chains.

It catalyses the reaction ATP-dependent breakage, passage and rejoining of double-stranded DNA.. Relaxes both positive and negative superturns and exhibits a strong decatenase activity. The sequence is that of Type 2 DNA topoisomerase 6 subunit B from Halobacterium salinarum (strain ATCC 29341 / DSM 671 / R1).